A 377-amino-acid chain; its full sequence is 4-hydroxy-3-methylbut-2-en-1-yl diphosphate synthase (flavodoxin) (377 aa).

Residues Cys275, Cys278, Cys310, and Glu317 each contribute to the [4Fe-4S] cluster site.

This sequence belongs to the IspG family. The cofactor is [4Fe-4S] cluster.

It carries out the reaction (2E)-4-hydroxy-3-methylbut-2-enyl diphosphate + oxidized [flavodoxin] + H2O + 2 H(+) = 2-C-methyl-D-erythritol 2,4-cyclic diphosphate + reduced [flavodoxin]. It functions in the pathway isoprenoid biosynthesis; isopentenyl diphosphate biosynthesis via DXP pathway; isopentenyl diphosphate from 1-deoxy-D-xylulose 5-phosphate: step 5/6. Converts 2C-methyl-D-erythritol 2,4-cyclodiphosphate (ME-2,4cPP) into 1-hydroxy-2-methyl-2-(E)-butenyl 4-diphosphate. In Ruegeria sp. (strain TM1040) (Silicibacter sp.), this protein is 4-hydroxy-3-methylbut-2-en-1-yl diphosphate synthase (flavodoxin).